Reading from the N-terminus, the 246-residue chain is Auxin-responsive protein IAA11 (246 aa).

An EAR-like (transcriptional repression) motif is present at residues 36 to 40; it reads LGLTL. The region spanning 136 to 235 is the PB1 domain; sequence SMFVKVTMDG…SVRRLRIMKT (100 aa).

The protein belongs to the Aux/IAA family. As to quaternary structure, homodimers and heterodimers. Interacts with TPL. As to expression, preferentially expressed in stems and flowers.

Its subcellular location is the nucleus. Aux/IAA proteins are short-lived transcriptional factors that function as repressors of early auxin response genes at low auxin concentrations. Repression is thought to result from the interaction with auxin response factors (ARFs), proteins that bind to the auxin-responsive promoter element (AuxRE). Formation of heterodimers with ARF proteins may alter their ability to modulate early auxin response genes expression. In Arabidopsis thaliana (Mouse-ear cress), this protein is Auxin-responsive protein IAA11 (IAA11).